The following is a 220-amino-acid chain: MGKNKVVLLFSGGIDSTVLLFWLLSRNYEIFPLFINYGQKSYEGELEAINKILKDLNTKNNLLTLNMPELQLVGSGALVGEYPKNISSHNEWYASEFFPNRNMILLSIAATYGYKLQISKIAIGVVGDSYQDTTRTFLEAMEMTLAQSIARYELIAPFAGHPRQKVIEEAYRLQVPLKSTFSCNAMGNRHCLLCTSCYEREKAIQLHEQCGKERAEKSDF.

An ATP-binding site is contributed by 10–20 (FSGGIDSTVLL). Zn(2+) contacts are provided by Cys183, Cys191, Cys194, and Cys197.

It belongs to the QueC family. In terms of assembly, homodimer. The cofactor is Zn(2+).

The catalysed reaction is 7-carboxy-7-deazaguanine + NH4(+) + ATP = 7-cyano-7-deazaguanine + ADP + phosphate + H2O + H(+). Its pathway is purine metabolism; 7-cyano-7-deazaguanine biosynthesis. In terms of biological role, catalyzes the ATP-dependent conversion of 7-carboxy-7-deazaguanine (CDG) to 7-cyano-7-deazaguanine (preQ(0)). The protein is 7-cyano-7-deazaguanine synthase 1 of Desulfitobacterium hafniense (strain Y51).